The chain runs to 296 residues: Endonuclease 5 (296 aa).

A signal peptide spans 1 to 20 (MRLWIVSVLVLTHLVHGALC). Positions 21 and 26 each coordinate a divalent metal cation. 21–26 (WGKDGH) contributes to the substrate binding site. A disulfide bond links cysteine 30 and cysteine 62. Aspartate 66 and histidine 81 together coordinate a divalent metal cation. Substrate contacts are provided by residues 66-72 (DEIKKLS), 81-84 (HYVN), and 91-96 (NYEYCR). 3 disulfides stabilise this stretch: cysteine 90–cysteine 243, cysteine 98–cysteine 108, and cysteine 223–cysteine 230. Substrate-binding residues include asparagine 115 and tyrosine 133. Asparagine 115 is a glycosylation site (N-linked (GlcNAc...) asparagine). N-linked (GlcNAc...) asparagine glycosylation is present at asparagine 134. The a divalent metal cation site is built by histidine 144, aspartate 148, and histidine 154. The segment at 144–193 (HYMGDVHQPLHTGFLGDLGGNTIIVNWYHNKSNLHHVWDNMIIDSALETY) is substrate binding. A glycan (N-linked (GlcNAc...) asparagine) is linked at asparagine 173. The a divalent metal cation site is built by histidine 178 and aspartate 182. Asparagine 195 is a glycosylation site (N-linked (GlcNAc...) asparagine). A propeptide spans 281 to 296 (ATLNRIFSAKPKLAGL) (removed in mature form).

This sequence belongs to the nuclease type I family. In terms of assembly, monomer. Zn(2+) is required as a cofactor.

It catalyses the reaction Endonucleolytic cleavage to 5'-phosphomononucleotide and 5'-phosphooligonucleotide end-products.. Hydrolyzes, with low efficiency, only single-stranded DNA and RNA without apparent specificity for bases. Endonuclease that recognizes and cleaves some mismatches with high efficiency, including heteroduplex double-stranded DNA; mostly efficient on T/G, A/G and G/G mismatches, less efficient for T/T and poorly efficient for C/C, A/A, T/C and A/C. This chain is Endonuclease 5, found in Arabidopsis thaliana (Mouse-ear cress).